The sequence spans 432 residues: Lipid-A-disaccharide synthase (432 aa).

Polar residues predominate over residues 1-11; that stretch reads MTGIGNQTSGI. Positions 1–35 are disordered; it reads MTGIGNQTSGIETGVHDRAPADGEPTALPISHSPL.

Belongs to the LpxB family.

The catalysed reaction is a lipid X + a UDP-2-N,3-O-bis[(3R)-3-hydroxyacyl]-alpha-D-glucosamine = a lipid A disaccharide + UDP + H(+). Its pathway is bacterial outer membrane biogenesis; LPS lipid A biosynthesis. Functionally, condensation of UDP-2,3-diacylglucosamine and 2,3-diacylglucosamine-1-phosphate to form lipid A disaccharide, a precursor of lipid A, a phosphorylated glycolipid that anchors the lipopolysaccharide to the outer membrane of the cell. This Xanthomonas oryzae pv. oryzae (strain MAFF 311018) protein is Lipid-A-disaccharide synthase.